The primary structure comprises 557 residues: Dihydroxy-acid dehydratase (557 aa).

Residue Asp-78 coordinates Mg(2+). Cys-119 provides a ligand contact to [2Fe-2S] cluster. Asp-120 and Lys-121 together coordinate Mg(2+). Residue Lys-121 is modified to N6-carboxylysine. [2Fe-2S] cluster is bound at residue Cys-192. A Mg(2+)-binding site is contributed by Glu-442. Ser-468 functions as the Proton acceptor in the catalytic mechanism.

It belongs to the IlvD/Edd family. Homodimer. Requires [2Fe-2S] cluster as cofactor. Mg(2+) serves as cofactor.

It catalyses the reaction (2R)-2,3-dihydroxy-3-methylbutanoate = 3-methyl-2-oxobutanoate + H2O. The catalysed reaction is (2R,3R)-2,3-dihydroxy-3-methylpentanoate = (S)-3-methyl-2-oxopentanoate + H2O. It participates in amino-acid biosynthesis; L-isoleucine biosynthesis; L-isoleucine from 2-oxobutanoate: step 3/4. The protein operates within amino-acid biosynthesis; L-valine biosynthesis; L-valine from pyruvate: step 3/4. In terms of biological role, functions in the biosynthesis of branched-chain amino acids. Catalyzes the dehydration of (2R,3R)-2,3-dihydroxy-3-methylpentanoate (2,3-dihydroxy-3-methylvalerate) into 2-oxo-3-methylpentanoate (2-oxo-3-methylvalerate) and of (2R)-2,3-dihydroxy-3-methylbutanoate (2,3-dihydroxyisovalerate) into 2-oxo-3-methylbutanoate (2-oxoisovalerate), the penultimate precursor to L-isoleucine and L-valine, respectively. In Bacillus mycoides (strain KBAB4) (Bacillus weihenstephanensis), this protein is Dihydroxy-acid dehydratase.